The sequence spans 808 residues: Transducin beta-like protein 3 (808 aa).

An N-acetylalanine modification is found at Ala2. WD repeat units follow at residues 64-105 (EDQE…RLWK), 107-146 (IHTAPVATMAFDPTSTLLATGGCDGAVRVWDIVRHYGTHH), 149-190 (GSPG…CLAV), 193-232 (AHYSAVTSLAFSADGHTMLSSGRDKICIIWDLQSCQATRT), 245-284 (LPEEPVSQLGVKSPGLYFLTAGDQGTLRVWEAASGQCVYT), 290-329 (GPGQELTHCTLAHTAGVVLTATADHNLLLYEARSLRLQKQ), 332-372 (GYSE…CQIL), 374-413 (GHTDIVLALDVFRKGWLFASCAKDQSVRIWRMNKAGQVMC), 419-459 (GHTH…LSKN), 477-516 (CHDKDINSVAIAPNDKLLATGSQDRTAKLWALPQCQLLGV), 519-560 (GHRR…KTFE), 562-602 (HDAS…RTLD), and 604-642 (HEDKVWGLHCSRLDDHALTGASDSRVILWKDVTEAEQAE). The residue at position 257 (Ser257) is a Phosphoserine. Lys407 participates in a covalent cross-link: Glycyl lysine isopeptide (Lys-Gly) (interchain with G-Cter in SUMO2).

In terms of assembly, part of the small subunit (SSU) processome, composed of more than 70 proteins and the RNA chaperone small nucleolar RNA (snoRNA) U3.

It is found in the nucleus. The protein resides in the nucleolus. Part of the small subunit (SSU) processome, first precursor of the small eukaryotic ribosomal subunit. During the assembly of the SSU processome in the nucleolus, many ribosome biogenesis factors, an RNA chaperone and ribosomal proteins associate with the nascent pre-rRNA and work in concert to generate RNA folding, modifications, rearrangements and cleavage as well as targeted degradation of pre-ribosomal RNA by the RNA exosome. The sequence is that of Transducin beta-like protein 3 from Homo sapiens (Human).